Here is a 352-residue protein sequence, read N- to C-terminus: Phosphoribosylformylglycinamidine cyclo-ligase (352 aa).

It belongs to the AIR synthase family.

It localises to the cytoplasm. The enzyme catalyses 2-formamido-N(1)-(5-O-phospho-beta-D-ribosyl)acetamidine + ATP = 5-amino-1-(5-phospho-beta-D-ribosyl)imidazole + ADP + phosphate + H(+). Its pathway is purine metabolism; IMP biosynthesis via de novo pathway; 5-amino-1-(5-phospho-D-ribosyl)imidazole from N(2)-formyl-N(1)-(5-phospho-D-ribosyl)glycinamide: step 2/2. The chain is Phosphoribosylformylglycinamidine cyclo-ligase from Saccharophagus degradans (strain 2-40 / ATCC 43961 / DSM 17024).